Here is a 557-residue protein sequence, read N- to C-terminus: DNA 3'-5' helicase XPB (557 aa).

Residues 1–135 (MTDGPLIVQS…APLLGTRIAP (135 aa)) form a required for protein stability or solubility region. The Helicase ATP-binding domain occupies 190 to 344 (VDNFWNGGSG…DVFSLIGPKR (155 aa)). ATP is bound at residue 203 to 210 (LPCGAGKT). Positions 298 to 301 (DEVH) match the DEAH box motif. The region spanning 398 to 544 (RVVEKLVAQH…AYRIVDADDI (147 aa)) is the Helicase C-terminal domain.

This sequence belongs to the helicase family. RAD25/XPB subfamily. In terms of assembly, monomer. Mn(2+) is required as a cofactor. The cofactor is Mg(2+). Requires Ca(2+) as cofactor.

It carries out the reaction Couples ATP hydrolysis with the unwinding of duplex DNA by translocating in the 3'-5' direction.. The catalysed reaction is ATP + H2O = ADP + phosphate + H(+). Functionally, ATP-dependent 3'-5' DNA helicase, unwinds 3'-overhangs, 3'- flaps, and splayed-arm DNA substrates but not 5'-overhangs or 5'-flap substrates. Requires ATP hydrolysis for activity; the ATPase activity is DNA-dependent and requires a minimum of 4 single-stranded nucleotides (nt) with 6-10 nt providing all necessary interactions for full processive unwinding. The ATPase prefers ATP over CTP or GTP, is almost inactive with TTP. This chain is DNA 3'-5' helicase XPB, found in Kineococcus radiotolerans (strain ATCC BAA-149 / DSM 14245 / SRS30216).